A 278-amino-acid chain; its full sequence is Phosphatidylglycerol--prolipoprotein diacylglyceryl transferase (278 aa).

Transmembrane regions (helical) follow at residues 19–39 (WYGILMATGVLVATLMAINEG), 49–69 (FIDFLLWAVPIGFIGARIYYV), 86–106 (IWNGGIAIYGGLIAGLIVLLI), and 112–132 (MLPPFLMLDIIAPGVMAAQVI). Residue Arg-134 coordinates a 1,2-diacyl-sn-glycero-3-phospho-(1'-sn-glycerol). Transmembrane regions (helical) follow at residues 174 to 194 (QPTYLYESTLNLIGLILILSL), 204 to 224 (GEIFLSYVIWYSAVRFFVEGM), and 235 to 255 (IRVSQALSLILFFGAIILWIY).

It belongs to the Lgt family.

The protein localises to the cell membrane. The enzyme catalyses L-cysteinyl-[prolipoprotein] + a 1,2-diacyl-sn-glycero-3-phospho-(1'-sn-glycerol) = an S-1,2-diacyl-sn-glyceryl-L-cysteinyl-[prolipoprotein] + sn-glycerol 1-phosphate + H(+). The protein operates within protein modification; lipoprotein biosynthesis (diacylglyceryl transfer). Its function is as follows. Catalyzes the transfer of the diacylglyceryl group from phosphatidylglycerol to the sulfhydryl group of the N-terminal cysteine of a prolipoprotein, the first step in the formation of mature lipoproteins. This chain is Phosphatidylglycerol--prolipoprotein diacylglyceryl transferase, found in Lactobacillus johnsonii (strain CNCM I-12250 / La1 / NCC 533).